Here is an 81-residue protein sequence, read N- to C-terminus: Sec-independent protein translocase protein TatA (81 aa).

A helical membrane pass occupies residues 1-21 (MGMPSGQELLIILAIVVLLFG). The tract at residues 45 to 81 (NEDDDTEVKSASTEAPKKVESAEEVASKESSKTPTQA) is disordered. Positions 59–75 (APKKVESAEEVASKESS) are enriched in basic and acidic residues.

Belongs to the TatA/E family. As to quaternary structure, the Tat system comprises two distinct complexes: a TatABC complex, containing multiple copies of TatA, TatB and TatC subunits, and a separate TatA complex, containing only TatA subunits. Substrates initially bind to the TatABC complex, which probably triggers association of the separate TatA complex to form the active translocon.

The protein resides in the cell inner membrane. Part of the twin-arginine translocation (Tat) system that transports large folded proteins containing a characteristic twin-arginine motif in their signal peptide across membranes. TatA could form the protein-conducting channel of the Tat system. This Sulfurimonas denitrificans (strain ATCC 33889 / DSM 1251) (Thiomicrospira denitrificans (strain ATCC 33889 / DSM 1251)) protein is Sec-independent protein translocase protein TatA.